The primary structure comprises 197 residues: MSSAPAQGPAPASLTLWDEEDFQGRRCRLLSDCANIGERGGLRRVRSVKVENGAWVAFEYPDFQGQQFILEKGDYPRWSAWSGSAGHHSDQLLSFRPVLCANHSDSRVTLFEGENFQGCKFELNDDYPSLPSMGWASKDVGSLKVSSGAWVAYQYPGYRGYQYVLERDHHSGEFRNYSEFGTQAHTGQLQSIRRVQH.

Positions 1–11 (MSSAPAQGPAP) are N-terminal arm. Beta/gamma crystallin 'Greek key' domains follow at residues 12–52 (ASLT…KVEN) and 53–99 (GAWV…RPVL). Residues 100 to 105 (CANHSD) form a connecting peptide region. 2 Beta/gamma crystallin 'Greek key' domains span residues 106 to 147 (SRVT…KVSS) and 148 to 196 (GAWV…RRVQ).

It belongs to the beta/gamma-crystallin family. As to quaternary structure, homo/heterodimer, or complexes of higher-order. The structure of beta-crystallin oligomers seems to be stabilized through interactions between the N-terminal arms.

Its function is as follows. Crystallins are the dominant structural components of the vertebrate eye lens. This Bos taurus (Bovine) protein is Beta-crystallin A2 (CRYBA2).